The following is a 124-amino-acid chain: Small ribosomal subunit protein uS12 (124 aa).

Position 89 is a 3-methylthioaspartic acid (Asp89).

This sequence belongs to the universal ribosomal protein uS12 family. As to quaternary structure, part of the 30S ribosomal subunit. Contacts proteins S8 and S17. May interact with IF1 in the 30S initiation complex.

With S4 and S5 plays an important role in translational accuracy. Functionally, interacts with and stabilizes bases of the 16S rRNA that are involved in tRNA selection in the A site and with the mRNA backbone. Located at the interface of the 30S and 50S subunits, it traverses the body of the 30S subunit contacting proteins on the other side and probably holding the rRNA structure together. The combined cluster of proteins S8, S12 and S17 appears to hold together the shoulder and platform of the 30S subunit. In Thermoanaerobacter pseudethanolicus (strain ATCC 33223 / 39E) (Clostridium thermohydrosulfuricum), this protein is Small ribosomal subunit protein uS12.